The primary structure comprises 273 residues: NADPH-dependent 7-cyano-7-deazaguanine reductase (273 aa).

80 to 82 (VES) contributes to the substrate binding site. NADPH is bound at residue 82 to 83 (SK). C180 (thioimide intermediate) is an active-site residue. The active-site Proton donor is D187. 219-220 (HE) is a substrate binding site. Position 248–249 (248–249 (RG)) interacts with NADPH.

It belongs to the GTP cyclohydrolase I family. QueF type 2 subfamily. As to quaternary structure, homodimer.

Its subcellular location is the cytoplasm. It catalyses the reaction 7-aminomethyl-7-carbaguanine + 2 NADP(+) = 7-cyano-7-deazaguanine + 2 NADPH + 3 H(+). It participates in tRNA modification; tRNA-queuosine biosynthesis. Catalyzes the NADPH-dependent reduction of 7-cyano-7-deazaguanine (preQ0) to 7-aminomethyl-7-deazaguanine (preQ1). This chain is NADPH-dependent 7-cyano-7-deazaguanine reductase, found in Bordetella bronchiseptica (strain ATCC BAA-588 / NCTC 13252 / RB50) (Alcaligenes bronchisepticus).